We begin with the raw amino-acid sequence, 404 residues long: Deoxyguanosinetriphosphate triphosphohydrolase-like protein (404 aa).

Positions 1–32 are disordered; that stretch reads MAVGMAAPHATYASDPARSRGRLFDEPPSKTR. The segment covering 22–32 has biased composition (basic and acidic residues); sequence RLFDEPPSKTR. The region spanning 69 to 217 is the HD domain; it reads RLTHTLEVAQ…AAIADDIAYD (149 aa).

Belongs to the dGTPase family. Type 2 subfamily.

The sequence is that of Deoxyguanosinetriphosphate triphosphohydrolase-like protein from Nitrobacter hamburgensis (strain DSM 10229 / NCIMB 13809 / X14).